The primary structure comprises 678 residues: DNA ligase (678 aa).

NAD(+) contacts are provided by residues 47 to 51, 96 to 97, and Glu-122; these read DSDYD and SL. The active-site N6-AMP-lysine intermediate is Lys-124. Arg-145, Glu-182, Lys-300, and Lys-324 together coordinate NAD(+). Zn(2+) is bound by residues Cys-418, Cys-421, Cys-436, and Cys-442. One can recognise a BRCT domain in the interval 602–678; it reads AHNESFTNKT…IFEEDLQNLL (77 aa).

Belongs to the NAD-dependent DNA ligase family. LigA subfamily. Requires Mg(2+) as cofactor. The cofactor is Mn(2+).

It carries out the reaction NAD(+) + (deoxyribonucleotide)n-3'-hydroxyl + 5'-phospho-(deoxyribonucleotide)m = (deoxyribonucleotide)n+m + AMP + beta-nicotinamide D-nucleotide.. In terms of biological role, DNA ligase that catalyzes the formation of phosphodiester linkages between 5'-phosphoryl and 3'-hydroxyl groups in double-stranded DNA using NAD as a coenzyme and as the energy source for the reaction. It is essential for DNA replication and repair of damaged DNA. In Francisella philomiragia subsp. philomiragia (strain ATCC 25017 / CCUG 19701 / FSC 153 / O#319-036), this protein is DNA ligase.